A 528-amino-acid polypeptide reads, in one-letter code: Glucose-6-phosphate isomerase (528 aa).

Residue E322 is the Proton donor of the active site. Catalysis depends on residues H351 and K455.

Belongs to the GPI family.

The protein resides in the cytoplasm. The catalysed reaction is alpha-D-glucose 6-phosphate = beta-D-fructose 6-phosphate. The protein operates within carbohydrate biosynthesis; gluconeogenesis. It functions in the pathway carbohydrate degradation; glycolysis; D-glyceraldehyde 3-phosphate and glycerone phosphate from D-glucose: step 2/4. In terms of biological role, catalyzes the reversible isomerization of glucose-6-phosphate to fructose-6-phosphate. The polypeptide is Glucose-6-phosphate isomerase (Trichormus variabilis (strain ATCC 29413 / PCC 7937) (Anabaena variabilis)).